The primary structure comprises 449 residues: Tubulin alpha-8 chain (449 aa).

Positions 1 to 4 match the MREC motif motif; that stretch reads MREC. GTP is bound by residues Q11, E71, S140, G144, T145, T179, N206, and N228. E71 is a Mg(2+) binding site. Residue E254 is part of the active site.

Belongs to the tubulin family. Dimer of alpha and beta chains. A typical microtubule is a hollow water-filled tube with an outer diameter of 25 nm and an inner diameter of 15 nM. Alpha-beta heterodimers associate head-to-tail to form protofilaments running lengthwise along the microtubule wall with the beta-tubulin subunit facing the microtubule plus end conferring a structural polarity. Microtubules usually have 13 protofilaments but different protofilament numbers can be found in some organisms and specialized cells. Mg(2+) serves as cofactor. Some glutamate residues at the C-terminus are polyglycylated, resulting in polyglycine chains on the gamma-carboxyl group. Glycylation is mainly limited to tubulin incorporated into axonemes (cilia and flagella) whereas glutamylation is prevalent in neuronal cells, centrioles, axonemes, and the mitotic spindle. Both modifications can coexist on the same protein on adjacent residues, and lowering polyglycylation levels increases polyglutamylation, and reciprocally. Cilia and flagella glycylation is required for their stability and maintenance. Flagella glycylation controls sperm motility. In terms of processing, some glutamate residues at the C-terminus are polyglutamylated, resulting in polyglutamate chains on the gamma-carboxyl group. Polyglutamylation plays a key role in microtubule severing by spastin (SPAST). SPAST preferentially recognizes and acts on microtubules decorated with short polyglutamate tails: severing activity by SPAST increases as the number of glutamates per tubulin rises from one to eight, but decreases beyond this glutamylation threshold. Glutamylation is also involved in cilia motility. Post-translationally, the C-terminal phenylalanine residue is cleaved by MATCAP1/KIAA0895L.

It localises to the cytoplasm. The protein localises to the cytoskeleton. It catalyses the reaction GTP + H2O = GDP + phosphate + H(+). Tubulin is the major constituent of microtubules, a cylinder consisting of laterally associated linear protofilaments composed of alpha- and beta-tubulin heterodimers. Microtubules grow by the addition of GTP-tubulin dimers to the microtubule end, where a stabilizing cap forms. Below the cap, tubulin dimers are in GDP-bound state, owing to GTPase activity of alpha-tubulin. This is Tubulin alpha-8 chain (TUBA8) from Bos taurus (Bovine).